The chain runs to 426 residues: Serine--tRNA ligase (426 aa).

Residue 233–235 (TAE) participates in L-serine binding. ATP is bound at residue 264–266 (RAE). Glu287 is a binding site for L-serine. 351–354 (EISS) contacts ATP. L-serine is bound at residue Ser387.

The protein belongs to the class-II aminoacyl-tRNA synthetase family. Type-1 seryl-tRNA synthetase subfamily. Homodimer. The tRNA molecule binds across the dimer.

It is found in the cytoplasm. The catalysed reaction is tRNA(Ser) + L-serine + ATP = L-seryl-tRNA(Ser) + AMP + diphosphate + H(+). It carries out the reaction tRNA(Sec) + L-serine + ATP = L-seryl-tRNA(Sec) + AMP + diphosphate + H(+). It participates in aminoacyl-tRNA biosynthesis; selenocysteinyl-tRNA(Sec) biosynthesis; L-seryl-tRNA(Sec) from L-serine and tRNA(Sec): step 1/1. Functionally, catalyzes the attachment of serine to tRNA(Ser). Is also able to aminoacylate tRNA(Sec) with serine, to form the misacylated tRNA L-seryl-tRNA(Sec), which will be further converted into selenocysteinyl-tRNA(Sec). In Clostridium kluyveri (strain NBRC 12016), this protein is Serine--tRNA ligase.